We begin with the raw amino-acid sequence, 119 residues long: Beta-2-microglobulin (119 aa).

The first 20 residues, 1 to 20 (MARSVVVALLVLLSLSGLEA), serve as a signal peptide directing secretion. An Ig-like C1-type domain is found at 25–114 (PKIQVYSRHP…VTFPTPKTVK (90 aa)). Cysteines 45 and 100 form a disulfide.

Belongs to the beta-2-microglobulin family. Heterodimer of an alpha chain and a beta chain. Beta-2-microglobulin is the beta-chain of major histocompatibility complex class I molecules.

It localises to the secreted. In terms of biological role, component of the class I major histocompatibility complex (MHC). Involved in the presentation of peptide antigens to the immune system. The protein is Beta-2-microglobulin (B2M) of Lagothrix lagotricha (Brown woolly monkey).